The sequence spans 434 residues: F-box/LRR-repeat protein 21 (434 aa).

Residues leucine 39 to phenylalanine 85 form the F-box domain. LRR repeat units follow at residues aspartate 187 to serine 213, cysteine 214 to tyrosine 239, leucine 242 to valine 265, glycine 322 to alanine 347, glycine 349 to glutamate 374, and cysteine 375 to glutamate 400.

In terms of assembly, part of the SCF (SKP1-CUL1-F-box) E3 ubiquitin-protein ligase complex SCF(FBXL21) composed of CUL1, SKP1, RBX1 and FBXL21. Interacts with CRY1 and CRY2. In terms of tissue distribution, expressed in the hypothalamus, especially in the suprachiasmatic nucleus (SCN). Expression is driven by the core-clock. There is a pronounced diurnal and circadian expression rhythms rising rapidly at the start of the day and declining at the onset of the night.

The protein resides in the cytoplasm. It localises to the cytosol. Its subcellular location is the nucleus. It functions in the pathway protein modification; protein ubiquitination. Functionally, substrate-recognition component of the SCF(FBXL21) E3 ubiquitin ligase complex involved in circadian rhythm function. Plays a key role in the maintenance of both the speed and the robustness of the circadian clock oscillation. The SCF(FBXL21) complex mainly acts in the cytosol and mediates ubiquitination of CRY proteins (CRY1 and CRY2), leading to CRY proteins stabilization. The SCF(FBXL21) complex counteracts the activity of the SCF(FBXL3) complex and protects CRY proteins from degradation. Involved in the hypothalamic suprachiasmatic nucleus (SCN) clock regulating temporal organization of the daily activities. The chain is F-box/LRR-repeat protein 21 (Fbxl21) from Mus musculus (Mouse).